Here is a 104-residue protein sequence, read N- to C-terminus: Large ribosomal subunit protein bL21 (104 aa).

The protein belongs to the bacterial ribosomal protein bL21 family. As to quaternary structure, part of the 50S ribosomal subunit. Contacts protein L20.

Its function is as follows. This protein binds to 23S rRNA in the presence of protein L20. The sequence is that of Large ribosomal subunit protein bL21 from Agrobacterium fabrum (strain C58 / ATCC 33970) (Agrobacterium tumefaciens (strain C58)).